The sequence spans 180 residues: MKKERLEQAAAFGKERAKKKKNTDTTSNLVPVPKGAKKEKKRVGRGPGSKVGKTAGRGSKGQYARNTVRRGFEGGQMPIHRRLPKRGFTAKFHKEFYPVNLRDIEKSGLTGNIDAKIMVQSKILDKETTLFKILGTGEIKKAIHVIADGFSQSAKEKIEKAGGSIKLRAEIELAASETKK.

The tract at residues 1–62 is disordered; it reads MKKERLEQAA…KTAGRGSKGQ (62 aa). Positions 35 to 44 are enriched in basic residues; sequence GAKKEKKRVG.

Belongs to the universal ribosomal protein uL15 family. Part of the 50S ribosomal subunit.

Its function is as follows. Binds to the 23S rRNA. The chain is Large ribosomal subunit protein uL15 from Leptospira borgpetersenii serovar Hardjo-bovis (strain JB197).